Consider the following 173-residue polypeptide: Thiol-disulfide oxidoreductase ResA (173 aa).

A helical; Signal-anchor for type II membrane protein transmembrane segment spans residues 10-29 (VIILLILCGAVGFTLYQGFF). Residues 35–173 (MQIGKEAPNF…LEGYLQKITP (139 aa)) form the Thioredoxin domain. An intrachain disulfide couples Cys-73 to Cys-76.

Belongs to the thioredoxin family. ResA subfamily.

It is found in the cell membrane. The protein operates within protein modification; cytochrome c assembly. Thiol-disulfide oxidoreductase which is required in disulfide reduction during c-type cytochrome synthesis. May accept reducing equivalents from CcdA, leading to breakage of disulfide bonds in apocytochrome c; following this reduction heme can be covalently attached. This chain is Thiol-disulfide oxidoreductase ResA, found in Bacillus cereus (strain ZK / E33L).